A 124-amino-acid chain; its full sequence is Photoactive yellow protein (124 aa).

One can recognise a PAS domain in the interval Ala-22–Gly-85. Cys-68 is subject to S-(4-hydroxycinnamyl)cysteine.

This sequence belongs to the photoactive yellow protein family. The 4-hydroxycinnamic acid (p-coumaric acid) chromophore is covalently bound via a thioester linkage.

Its function is as follows. This photoactive protein is a photoreceptor with kinetics similar to that of rhodopsin. This is Photoactive yellow protein (pyp) from Cereibacter sphaeroides (strain ATCC 17023 / DSM 158 / JCM 6121 / CCUG 31486 / LMG 2827 / NBRC 12203 / NCIMB 8253 / ATH 2.4.1.) (Rhodobacter sphaeroides).